Here is a 409-residue protein sequence, read N- to C-terminus: MKKITTIFVVLLMTLALFIIGNTTAADDYSVVEEHGQLSISNGELVNDRGEPVQLKGMSSHGLQWYGQFVNYESMKWLRDDWGITVFRAAMYTSSGGYIEDPSVKEKVKEAVEAAIDLGIYVIIDWHILSDNDPNIYKEEAKDFFDEMSELYGDYPNVIYEIANEPNGSDVTWDNQIKPYAEEVIPVIRNNDPNNIIIVGTGTWSQDVHHAADNQLTDPNVMYAFHFYAGTHGQNLRDQVDYALDQGAAIFVSEWGTSEATGDGGVFLDEAQVWIDFMDERNLSWANWSLTHKDESSAALMPGASPTGGWTEAELSPSGTFVREKIRESATTPPSDPTPPSDPDPGEPEPDPGEPDPTPPSDPGDYPAWDPNTIYTDEIVYHNGQLWQAKWWTQNQEPGDPYGPWEPLN.

Residues H61, 65 to 66 (WY), Y92, and H127 each bind substrate. E165 (proton donor) is an active-site residue. Y228 contributes to the substrate binding site. The active-site Nucleophile is E254. Substrate contacts are provided by residues 260–261 (AT), W288, and 293–295 (KDE). Positions 326–372 (IRESATTPPSDPTPPSDPDPGEPEPDPGEPDPTPPSDPGDYPAWDPN) are disordered. A compositionally biased stretch (pro residues) spans 334 to 343 (PSDPTPPSDP). Residues 344-354 (DPGEPEPDPGE) are compositionally biased toward acidic residues.

It belongs to the glycosyl hydrolase 5 (cellulase A) family.

It catalyses the reaction Endohydrolysis of (1-&gt;4)-beta-D-glucosidic linkages in cellulose, lichenin and cereal beta-D-glucans.. This is Endoglucanase B (celB) from Evansella cellulosilytica (strain ATCC 21833 / DSM 2522 / FERM P-1141 / JCM 9156 / N-4) (Bacillus cellulosilyticus).